A 100-amino-acid chain; its full sequence is Large ribosomal subunit protein uL23 (100 aa).

The protein belongs to the universal ribosomal protein uL23 family. In terms of assembly, part of the 50S ribosomal subunit. Contacts protein L29, and trigger factor when it is bound to the ribosome.

Functionally, one of the early assembly proteins it binds 23S rRNA. One of the proteins that surrounds the polypeptide exit tunnel on the outside of the ribosome. Forms the main docking site for trigger factor binding to the ribosome. In Pseudothermotoga lettingae (strain ATCC BAA-301 / DSM 14385 / NBRC 107922 / TMO) (Thermotoga lettingae), this protein is Large ribosomal subunit protein uL23.